The following is a 116-amino-acid chain: Large ribosomal subunit protein bL19 (116 aa).

Belongs to the bacterial ribosomal protein bL19 family.

This protein is located at the 30S-50S ribosomal subunit interface and may play a role in the structure and function of the aminoacyl-tRNA binding site. This is Large ribosomal subunit protein bL19 from Roseiflexus castenholzii (strain DSM 13941 / HLO8).